Consider the following 186-residue polypeptide: Mating-type-like protein ALPHA2 (186 aa).

Positions 112–174 form a DNA-binding region, homeobox; TALE-type; it reads KKIKSRRLTK…NRRRKEKNTK (63 aa).

This sequence belongs to the TALE/M-ATYP homeobox family. In terms of assembly, forms a heterodimer with A1.

The protein resides in the nucleus. Its function is as follows. Mating type proteins are sequence specific DNA-binding proteins that act as master switches in yeast differentiation by controlling gene expression in a cell type-specific fashion. Transcriptional corepressor that acts in conjunction with A1 to repress transcription both of homozygote-specific genes and of genes necessary for the white-opaque switch, a prerequisite for mating. The chain is Mating-type-like protein ALPHA2 (MTLALPHA2) from Candida albicans (strain SC5314 / ATCC MYA-2876) (Yeast).